Reading from the N-terminus, the 444-residue chain is Tubulin beta-9 chain (444 aa).

GTP is bound by residues Gln-11, Glu-69, Ser-138, Gly-142, Thr-143, Gly-144, Asn-204, and Asn-226. Glu-69 serves as a coordination point for Mg(2+).

Belongs to the tubulin family. In terms of assembly, dimer of alpha and beta chains. A typical microtubule is a hollow water-filled tube with an outer diameter of 25 nm and an inner diameter of 15 nM. Alpha-beta heterodimers associate head-to-tail to form protofilaments running lengthwise along the microtubule wall with the beta-tubulin subunit facing the microtubule plus end conferring a structural polarity. Microtubules usually have 13 protofilaments but different protofilament numbers can be found in some organisms and specialized cells. Interacts with TFCA. Mg(2+) is required as a cofactor.

Its subcellular location is the cytoplasm. It is found in the cytoskeleton. Tubulin is the major constituent of microtubules, a cylinder consisting of laterally associated linear protofilaments composed of alpha- and beta-tubulin heterodimers. Microtubules grow by the addition of GTP-tubulin dimers to the microtubule end, where a stabilizing cap forms. Below the cap, tubulin dimers are in GDP-bound state, owing to GTPase activity of alpha-tubulin. This is Tubulin beta-9 chain (TUBB9) from Arabidopsis thaliana (Mouse-ear cress).